The following is a 288-amino-acid chain: MTANLKVLASVFKLRIGVFCALAAIAGALATPGAVPDFAPVMAVALAVLLSAAAAGAFNHYWERDIDPMMNRTRNRPFATGQFAAGPLWPLGLLALTVAAVALAAFAANAWAALHVFLGAFVYGIVYTVWLKRRTAWNIVIGGLSGSFAVLAGAAVAVPTLSPESLILALVLFLWTPPHFWSLATALKDDYAAAGIPMLPVVCSETETNRIILANTIALVASSLLPAFFGAGPLYLGAAILGGGWFLYKSVALVRRPGRKAAMGNFFASLIQLVLLLTAVMVEPLLAG.

8 consecutive transmembrane segments (helical) span residues isoleucine 16–proline 36, phenylalanine 38–phenylalanine 58, leucine 88–alanine 108, tryptophan 111–leucine 131, isoleucine 139–proline 159, leucine 166–alanine 186, alanine 227–leucine 247, and phenylalanine 266–leucine 286.

The protein belongs to the UbiA prenyltransferase family. Protoheme IX farnesyltransferase subfamily.

Its subcellular location is the cell inner membrane. The enzyme catalyses heme b + (2E,6E)-farnesyl diphosphate + H2O = Fe(II)-heme o + diphosphate. It participates in porphyrin-containing compound metabolism; heme O biosynthesis; heme O from protoheme: step 1/1. In terms of biological role, converts heme B (protoheme IX) to heme O by substitution of the vinyl group on carbon 2 of heme B porphyrin ring with a hydroxyethyl farnesyl side group. This chain is Protoheme IX farnesyltransferase 2, found in Paramagnetospirillum magneticum (strain ATCC 700264 / AMB-1) (Magnetospirillum magneticum).